A 410-amino-acid polypeptide reads, in one-letter code: MAFVNANYLKLKAGYLFPEIARRVNQFLQAHPDAPLIRLGIGDVTEPLPAACREAMIKAVEEMGDRATFKGYGPEQGYPWLREKIAAHDFQARGCDIDASEIFISDGSKCDTGNILDIFGDSNRIAVTDPVYPVYVDTNVMAGHTGEANERGEYAGLVYLPITAENHFTATLPSEPVDLIYLCFPNNPTGAVASREHLQAWVDYARAHKAILFFDAAYEAFITDPAIPHSIYEIPGARECAIEFRSFSKNAGFTGTRCAFTVVPKGLKGQTPSGDAVELWSLWQRRQSTKFNGVSYIVQRGAEAVYSEAGQAQVRELVTFYMENARLIREKLTQAGFEVYGGVNAPYVWLKTPAGMGSWDFFDKLLHTCFVVGTPGAGFGAAGEGYLRLSAFNSRENVVEAMDRVVTAFA.

Substrate-binding residues include tyrosine 15 and glycine 42. Residues tyrosine 72, 108–109, tyrosine 132, asparagine 187, tyrosine 218, and 246–248 contribute to the pyridoxal 5'-phosphate site; these read SK and SFS. Residues lysine 109, tyrosine 132, and asparagine 187 each contribute to the substrate site. N6-(pyridoxal phosphate)lysine is present on lysine 249. The pyridoxal 5'-phosphate site is built by arginine 257 and asparagine 292. The substrate site is built by asparagine 292 and arginine 388.

The protein belongs to the class-I pyridoxal-phosphate-dependent aminotransferase family. LL-diaminopimelate aminotransferase subfamily. Homodimer. It depends on pyridoxal 5'-phosphate as a cofactor.

The catalysed reaction is (2S,6S)-2,6-diaminopimelate + 2-oxoglutarate = (S)-2,3,4,5-tetrahydrodipicolinate + L-glutamate + H2O + H(+). It participates in amino-acid biosynthesis; L-lysine biosynthesis via DAP pathway; LL-2,6-diaminopimelate from (S)-tetrahydrodipicolinate (aminotransferase route): step 1/1. Functionally, involved in the synthesis of meso-diaminopimelate (m-DAP or DL-DAP), required for both lysine and peptidoglycan biosynthesis. Catalyzes the direct conversion of tetrahydrodipicolinate to LL-diaminopimelate. The protein is LL-diaminopimelate aminotransferase of Thermosynechococcus vestitus (strain NIES-2133 / IAM M-273 / BP-1).